A 228-amino-acid polypeptide reads, in one-letter code: Cytochrome c oxidase subunit 2 (228 aa).

The Mitochondrial intermembrane portion of the chain corresponds to 1-14 (MAYPLQLGFQDATS). The chain crosses the membrane as a helical span at residues 15–45 (PVMEELLHFHDHTLMIIFLISSLVLYIIMLM). Residues 46–59 (LTSKLVHTNMMNVQ) lie on the Mitochondrial matrix side of the membrane. A helical transmembrane segment spans residues 60-87 (EMEMIWTILPAIILILIALPSLHTLYMM). Residues 88–228 (DEINNPLLTI…FENWSASLAQ (141 aa)) are Mitochondrial intermembrane-facing. Cu cation contacts are provided by His161, Cys196, Glu198, Cys200, His204, and Met207. Mg(2+) is bound at residue Glu198. Tyr218 carries the post-translational modification Phosphotyrosine.

The protein belongs to the cytochrome c oxidase subunit 2 family. Component of the cytochrome c oxidase (complex IV, CIV), a multisubunit enzyme composed of 14 subunits. The complex is composed of a catalytic core of 3 subunits MT-CO1, MT-CO2 and MT-CO3, encoded in the mitochondrial DNA, and 11 supernumerary subunits COX4I, COX5A, COX5B, COX6A, COX6B, COX6C, COX7A, COX7B, COX7C, COX8 and NDUFA4, which are encoded in the nuclear genome. The complex exists as a monomer or a dimer and forms supercomplexes (SCs) in the inner mitochondrial membrane with NADH-ubiquinone oxidoreductase (complex I, CI) and ubiquinol-cytochrome c oxidoreductase (cytochrome b-c1 complex, complex III, CIII), resulting in different assemblies (supercomplex SCI(1)III(2)IV(1) and megacomplex MCI(2)III(2)IV(2)). Found in a complex with TMEM177, COA6, COX18, COX20, SCO1 and SCO2. Interacts with TMEM177 in a COX20-dependent manner. Interacts with COX20. Interacts with COX16. Requires Cu cation as cofactor.

Its subcellular location is the mitochondrion inner membrane. It carries out the reaction 4 Fe(II)-[cytochrome c] + O2 + 8 H(+)(in) = 4 Fe(III)-[cytochrome c] + 2 H2O + 4 H(+)(out). In terms of biological role, component of the cytochrome c oxidase, the last enzyme in the mitochondrial electron transport chain which drives oxidative phosphorylation. The respiratory chain contains 3 multisubunit complexes succinate dehydrogenase (complex II, CII), ubiquinol-cytochrome c oxidoreductase (cytochrome b-c1 complex, complex III, CIII) and cytochrome c oxidase (complex IV, CIV), that cooperate to transfer electrons derived from NADH and succinate to molecular oxygen, creating an electrochemical gradient over the inner membrane that drives transmembrane transport and the ATP synthase. Cytochrome c oxidase is the component of the respiratory chain that catalyzes the reduction of oxygen to water. Electrons originating from reduced cytochrome c in the intermembrane space (IMS) are transferred via the dinuclear copper A center (CU(A)) of subunit 2 and heme A of subunit 1 to the active site in subunit 1, a binuclear center (BNC) formed by heme A3 and copper B (CU(B)). The BNC reduces molecular oxygen to 2 water molecules using 4 electrons from cytochrome c in the IMS and 4 protons from the mitochondrial matrix. The polypeptide is Cytochrome c oxidase subunit 2 (MT-CO2) (Loxodonta africana (African elephant)).